A 358-amino-acid polypeptide reads, in one-letter code: MTLETPVRVLIVDDSAVVRQMLTEILSRDPGIEVVGSAADPLLAREKIKRLNPDVITLDVEMPRMDGLVFLENLMRLRPTPVVMISSLTERGADTTLQALSLGAVDFISKPKIDVARGLEGYAEEIVSKVKMAAKAKVSALNRPSAPKITLDMQSAPVPGSALRFRTTDRLIAIGASAGGTEALRVVLEHMPADAPAVVMTQHLPASFSTAFAERLNRHSAMSVREASDGEAILPGHAYLPPGGQHLRIIRDGARWRCRIDDGPPVNRHKPAVDVLFRSVAANAGPNAVGAILTGMGDDGARGLLEMLQAGAPTLVQDEASSVVWGMPGAAYKLGAAQEVVPLERVAERLIALSAQAR.

The Response regulatory domain occupies 8 to 125; that stretch reads RVLIVDDSAV…ARGLEGYAEE (118 aa). Position 59 is a 4-aspartylphosphate (D59). One can recognise a CheB-type methylesterase domain in the interval 157-352; sequence PVPGSALRFR…LERVAERLIA (196 aa). Active-site residues include S177, H203, and D299.

It belongs to the CheB family. In terms of processing, phosphorylated by CheA. Phosphorylation of the N-terminal regulatory domain activates the methylesterase activity.

It is found in the cytoplasm. It catalyses the reaction [protein]-L-glutamate 5-O-methyl ester + H2O = L-glutamyl-[protein] + methanol + H(+). The catalysed reaction is L-glutaminyl-[protein] + H2O = L-glutamyl-[protein] + NH4(+). In terms of biological role, involved in chemotaxis. Part of a chemotaxis signal transduction system that modulates chemotaxis in response to various stimuli. Catalyzes the demethylation of specific methylglutamate residues introduced into the chemoreceptors (methyl-accepting chemotaxis proteins or MCP) by CheR. Also mediates the irreversible deamidation of specific glutamine residues to glutamic acid. This is Protein-glutamate methylesterase/protein-glutamine glutaminase 1 from Xanthomonas campestris pv. campestris (strain ATCC 33913 / DSM 3586 / NCPPB 528 / LMG 568 / P 25).